The sequence spans 60 residues: Large ribosomal subunit protein uL30 (60 aa).

This sequence belongs to the universal ribosomal protein uL30 family. Part of the 50S ribosomal subunit.

In Streptomyces avermitilis (strain ATCC 31267 / DSM 46492 / JCM 5070 / NBRC 14893 / NCIMB 12804 / NRRL 8165 / MA-4680), this protein is Large ribosomal subunit protein uL30.